Reading from the N-terminus, the 231-residue chain is Ion-translocating oxidoreductase complex subunit E (231 aa).

The next 6 helical transmembrane spans lie at A18–A38, L39–L59, T63–V83, L86–V106, A125–L145, and P182–G202.

This sequence belongs to the NqrDE/RnfAE family. The complex is composed of six subunits: RsxA, RsxB, RsxC, RsxD, RsxE and RsxG.

The protein localises to the cell inner membrane. Part of a membrane-bound complex that couples electron transfer with translocation of ions across the membrane. Required to maintain the reduced state of SoxR. In Shigella flexneri serotype 5b (strain 8401), this protein is Ion-translocating oxidoreductase complex subunit E.